A 181-amino-acid polypeptide reads, in one-letter code: Translation initiation factor IF-3 (181 aa).

Belongs to the IF-3 family. As to quaternary structure, monomer.

It localises to the cytoplasm. Its function is as follows. IF-3 binds to the 30S ribosomal subunit and shifts the equilibrium between 70S ribosomes and their 50S and 30S subunits in favor of the free subunits, thus enhancing the availability of 30S subunits on which protein synthesis initiation begins. This chain is Translation initiation factor IF-3, found in Azotobacter vinelandii.